The sequence spans 110 residues: U1-lycotoxin-Ls1mm (110 aa).

Positions 1–20 (MKFVLLFGVLLVTLFSYSSA) are cleaved as a signal peptide. Positions 21–44 (EMLDDFDQADEDELLSLIEKEEAR) are excised as a propeptide. Intrachain disulfides connect Cys-47/Cys-62, Cys-54/Cys-71, Cys-61/Cys-89, and Cys-73/Cys-87.

It belongs to the neurotoxin 19 (CSTX) family. 03 subfamily. As to expression, expressed by the venom gland.

The protein resides in the secreted. The polypeptide is U1-lycotoxin-Ls1mm (Lycosa singoriensis (Wolf spider)).